We begin with the raw amino-acid sequence, 451 residues long: Ammonium transporter Rh type B (451 aa).

Residues 1-11 (MADVSTSMRLK) are Cytoplasmic-facing. A helical membrane pass occupies residues 12 to 32 (LPVVCFILEIILIILFGALVQ). The Extracellular portion of the chain corresponds to 33–63 (YDYETDAKEWHNQSHNDYENDFYFRYPSFQD). Asparagine 44 carries N-linked (GlcNAc...) asparagine glycosylation. Residues 64 to 84 (VHVMIFIGFGFLMTFLQKYGF) form a helical membrane-spanning segment. At 85 to 87 (GSV) the chain is on the cytoplasmic side. A helical transmembrane segment spans residues 88-108 (GFNFLIAAFSLQWATLMQGFF). Residues 109–121 (HGMHGGKIHVGVE) are Extracellular-facing. A helical transmembrane segment spans residues 122–142 (SMINADFCTGSVLISFGAVLG). The Cytoplasmic segment spans residues 143-151 (KTSPIQLLT). The chain crosses the membrane as a helical span at residues 152–172 (MAMFEVTLFAVNEFILLSLLG). Over 173-176 (TRDA) the chain is Extracellular. Residues 177-197 (GGSMTIHTFGAYFGLMVTRIL) traverse the membrane as a helical segment. Residues 198 to 216 (YRPHLDKSKHRNSSVYHSD) lie on the Cytoplasmic side of the membrane. Residues 217–237 (LFAMIGTIYLWMFWPSFNSAI) form a helical membrane-spanning segment. Residues 238–247 (TAHGDDQHRT) lie on the Extracellular side of the membrane. A helical membrane pass occupies residues 248–270 (ALNTYYSLAACTLATYGMSAVTS). The Cytoplasmic portion of the chain corresponds to 271 to 274 (HDGK). The chain crosses the membrane as a helical span at residues 275-295 (LDMVHIQNAALAGGVAVGTAG). The Extracellular portion of the chain corresponds to 296–298 (EMM). Residues 299–319 (LTPFGSMIVGFLAGIISVLGF) form a helical membrane-spanning segment. The Cytoplasmic segment spans residues 320–340 (KFLSPILESKLKIQDTCGVHN). A helical membrane pass occupies residues 341 to 361 (LHGMPGVLGAIVGAVTAALAT). Topologically, residues 362–390 (MDVYGKGMEDVFPAVADGSIDASKQGGVQ) are extracellular. Residues 391-411 (ALSLAITLGIALLGGLIVVFG) traverse the membrane as a helical segment. Residues 412-451 (TPPDTLCFEDGVYWEVPESEAPHEAQLTTVRTEETEKLSS) lie on the Cytoplasmic side of the membrane.

It belongs to the ammonium transporter (TC 2.A.49) family. Rh subfamily.

It is found in the basolateral cell membrane. It localises to the cytoplasmic vesicle membrane. Its function is as follows. Functions as an ammonia transporter. May play a role in the elimination of ammonia in the gill. This chain is Ammonium transporter Rh type B (rhbg), found in Tetraodon nigroviridis (Spotted green pufferfish).